The chain runs to 178 residues: tRNA (cytidine(56)-2'-O)-methyltransferase (178 aa).

S-adenosyl-L-methionine contacts are provided by residues L84, 112–116 (GAEKV), and 130–137 (VGNQPHSE).

The protein belongs to the aTrm56 family. Homodimer.

It localises to the cytoplasm. It carries out the reaction cytidine(56) in tRNA + S-adenosyl-L-methionine = 2'-O-methylcytidine(56) in tRNA + S-adenosyl-L-homocysteine + H(+). Functionally, specifically catalyzes the AdoMet-dependent 2'-O-ribose methylation of cytidine at position 56 in tRNAs. This Methanocella arvoryzae (strain DSM 22066 / NBRC 105507 / MRE50) protein is tRNA (cytidine(56)-2'-O)-methyltransferase.